The primary structure comprises 75 residues: Small ribosomal subunit protein bS18c (75 aa).

Belongs to the bacterial ribosomal protein bS18 family. As to quaternary structure, part of the 30S ribosomal subunit.

It localises to the plastid. This Aneura mirabilis (Parasitic liverwort) protein is Small ribosomal subunit protein bS18c.